We begin with the raw amino-acid sequence, 554 residues long: Sesquiterpene synthase 14b (554 aa).

Aspartate 305, aspartate 309, aspartate 449, and glutamate 457 together coordinate Mg(2+). Positions aspartate 305–aspartate 309 match the DDXXD motif motif.

The protein belongs to the terpene synthase family. Tpsa subfamily. Mg(2+) serves as cofactor. The cofactor is Mn(2+).

It carries out the reaction (2E,6E)-farnesyl diphosphate = (E)-gamma-bisabolene + diphosphate. It catalyses the reaction (2Z,6Z)-farnesyl diphosphate = (E)-gamma-bisabolene + diphosphate. The enzyme catalyses (2Z,6Z)-farnesyl diphosphate = (E)-alpha-bisabolene + diphosphate. The catalysed reaction is (2Z,6Z)-farnesyl diphosphate = (Z)-beta-farnesene + diphosphate. It carries out the reaction (2E,6E)-farnesyl diphosphate = (E)-beta-farnesene + diphosphate. It catalyses the reaction (2E,6E)-farnesyl diphosphate = (+)-thujopsene + diphosphate. The enzyme catalyses (2Z,6Z)-farnesyl diphosphate = (E)-beta-farnesene + diphosphate. The catalysed reaction is (2E,6E)-farnesyl diphosphate = (Z)-beta-farnesene + diphosphate. It carries out the reaction (2Z,6Z)-farnesyl diphosphate = beta-acoradiene + diphosphate. It catalyses the reaction (2Z,6Z)-farnesyl diphosphate = alpha-acoradiene + diphosphate. The enzyme catalyses (2Z,6Z)-farnesyl diphosphate = beta-bisabolene + diphosphate. The catalysed reaction is (2E,6E)-farnesyl diphosphate = (-)-alpha-cedrene + diphosphate. It carries out the reaction (2E,6E)-farnesyl diphosphate = beta-bisabolene + diphosphate. It catalyses the reaction (2E,6E)-farnesyl diphosphate = beta-acoradiene + diphosphate. The enzyme catalyses (2Z,6Z)-farnesyl diphosphate = (-)-alpha-cedrene + diphosphate. The catalysed reaction is (2E)-geranyl diphosphate = terpinolene + diphosphate. It carries out the reaction (2E)-geranyl diphosphate = limonene + diphosphate. It catalyses the reaction (2E)-geranyl diphosphate = beta-myrcene + diphosphate. Its pathway is secondary metabolite biosynthesis; terpenoid biosynthesis. Its function is as follows. Sesquiterpene synthase involved in the biosynthesis of volatile compounds. Mediates the conversion of (2E,6E)-farnesyl diphosphate ((EE)-FPP) into (+)-thujopsene, beta-bisabolene, alpha-cederene, beta-acoradiene, (E)-gamma-bisabolene, (Z)-alpha-bisabolene, (Z)-beta-farnesene and (E)-beta-farnesene, and of (2Z,6Z)-farnesyl diphosphate ((ZZ)-FPP) into (E)-gamma-bisabolene, (E)-alpha-bisabolene, (E)-beta-farnesene, (Z)-beta-farnesene, beta-bisabolene, beta-acoradiene and alpha-acoradiene. Can act with a low efficiency as a monoterpene synthase with geranyl diphosphate (GPP) as substrate, thus producing beta-myrcene, limonene and terpinolene. This chain is Sesquiterpene synthase 14b, found in Solanum habrochaites (Wild tomato).